Consider the following 387-residue polypeptide: Chorismate synthase (387 aa).

Residues R42 and R48 each contribute to the NADP(+) site. Residues 131 to 133 (RSS), 251 to 252 (QA), G295, 310 to 314 (KPIPT), and R336 contribute to the FMN site.

This sequence belongs to the chorismate synthase family. As to quaternary structure, homotetramer. FMNH2 is required as a cofactor.

The enzyme catalyses 5-O-(1-carboxyvinyl)-3-phosphoshikimate = chorismate + phosphate. Its pathway is metabolic intermediate biosynthesis; chorismate biosynthesis; chorismate from D-erythrose 4-phosphate and phosphoenolpyruvate: step 7/7. In terms of biological role, catalyzes the anti-1,4-elimination of the C-3 phosphate and the C-6 proR hydrogen from 5-enolpyruvylshikimate-3-phosphate (EPSP) to yield chorismate, which is the branch point compound that serves as the starting substrate for the three terminal pathways of aromatic amino acid biosynthesis. This reaction introduces a second double bond into the aromatic ring system. This Syntrophotalea carbinolica (strain DSM 2380 / NBRC 103641 / GraBd1) (Pelobacter carbinolicus) protein is Chorismate synthase.